We begin with the raw amino-acid sequence, 494 residues long: Glutamyl-tRNA(Gln) amidotransferase subunit A (494 aa).

Catalysis depends on charge relay system residues Lys81 and Ser156. The active-site Acyl-ester intermediate is the Ser180.

It belongs to the amidase family. GatA subfamily. Heterotrimer of A, B and C subunits.

It carries out the reaction L-glutamyl-tRNA(Gln) + L-glutamine + ATP + H2O = L-glutaminyl-tRNA(Gln) + L-glutamate + ADP + phosphate + H(+). In terms of biological role, allows the formation of correctly charged Gln-tRNA(Gln) through the transamidation of misacylated Glu-tRNA(Gln) in organisms which lack glutaminyl-tRNA synthetase. The reaction takes place in the presence of glutamine and ATP through an activated gamma-phospho-Glu-tRNA(Gln). This is Glutamyl-tRNA(Gln) amidotransferase subunit A from Mycobacterium tuberculosis (strain ATCC 25177 / H37Ra).